The sequence spans 481 residues: Membrane-bound lytic murein transglycosylase F (481 aa).

The first 21 residues, 1 to 21 (MKPLKLNYFFIGIITLLLALA), serve as a signal peptide directing secretion. A non-LT domain region spans residues 22–268 (LWPSIPWRSS…RLEEKYLGHV (247 aa)). Residues 269–481 (GEFDYVDTTT…PAVPLTKVPE (213 aa)) are LT domain. The active site involves glutamate 313.

It in the N-terminal section; belongs to the bacterial solute-binding protein 3 family. In the C-terminal section; belongs to the transglycosylase Slt family.

It is found in the cell outer membrane. The enzyme catalyses Exolytic cleavage of the (1-&gt;4)-beta-glycosidic linkage between N-acetylmuramic acid (MurNAc) and N-acetylglucosamine (GlcNAc) residues in peptidoglycan, from either the reducing or the non-reducing ends of the peptidoglycan chains, with concomitant formation of a 1,6-anhydrobond in the MurNAc residue.. Functionally, murein-degrading enzyme that degrades murein glycan strands and insoluble, high-molecular weight murein sacculi, with the concomitant formation of a 1,6-anhydromuramoyl product. Lytic transglycosylases (LTs) play an integral role in the metabolism of the peptidoglycan (PG) sacculus. Their lytic action creates space within the PG sacculus to allow for its expansion as well as for the insertion of various structures such as secretion systems and flagella. This Pectobacterium atrosepticum (strain SCRI 1043 / ATCC BAA-672) (Erwinia carotovora subsp. atroseptica) protein is Membrane-bound lytic murein transglycosylase F.